A 517-amino-acid polypeptide reads, in one-letter code: UDP-N-acetylmuramyl-tripeptide synthetase (517 aa).

Position 48 (threonine 48) interacts with UDP-N-acetyl-alpha-D-muramoyl-L-alanyl-D-glutamate. 125 to 131 (GTKGKTT) is an ATP binding site. Residues 169 to 170 (TT), serine 196, and arginine 204 contribute to the UDP-N-acetyl-alpha-D-muramoyl-L-alanyl-D-glutamate site. At lysine 238 the chain carries N6-carboxylysine.

Belongs to the MurCDEF family. MurE subfamily. Carboxylation is probably crucial for Mg(2+) binding and, consequently, for the gamma-phosphate positioning of ATP.

The protein localises to the cytoplasm. It participates in cell wall biogenesis; peptidoglycan biosynthesis. Its function is as follows. Catalyzes the addition of an amino acid to the nucleotide precursor UDP-N-acetylmuramoyl-L-alanyl-D-glutamate (UMAG) in the biosynthesis of bacterial cell-wall peptidoglycan. This is UDP-N-acetylmuramyl-tripeptide synthetase from Bifidobacterium longum (strain NCC 2705).